The primary structure comprises 323 residues: Cytosolic sulfotransferase 5 (323 aa).

3'-phosphoadenylyl sulfate is bound at residue 69-74; sequence KCGTTW. His-135 serves as the catalytic Proton acceptor. Residues Arg-157, Ser-165, and 289–291 each bind 3'-phosphoadenylyl sulfate; that span reads RKG.

This sequence belongs to the sulfotransferase 1 family. In terms of tissue distribution, expressed in inflorescence stems, roots and siliques.

It is found in the cytoplasm. Its function is as follows. Sulfotransferase that utilizes 3'-phospho-5'-adenylyl sulfate (PAPS) as sulfonate donor to specifically catalyze the sulfate conjugation of flavones and flavonols. Strictly specific for the position 7. Substrate preference is kaempferol 3-sulfate &gt; isorhamnetin &gt; kaempferol. The sequence is that of Cytosolic sulfotransferase 5 (SOT5) from Arabidopsis thaliana (Mouse-ear cress).